A 344-amino-acid chain; its full sequence is Centromere protein N (344 aa).

It belongs to the CENP-N/CHL4 family.

It is found in the nucleus. It localises to the chromosome. The protein resides in the centromere. Functionally, probable component of a centromeric complex involved in assembly of kinetochore proteins, mitotic progression and chromosome segregation. This is Centromere protein N (CENPN) from Gallus gallus (Chicken).